The primary structure comprises 441 residues: Carbohydrate sulfotransferase 3 (441 aa).

Topologically, residues 1-4 are cytoplasmic; sequence MKMR. Residues 5 to 21 form a helical; Signal-anchor for type II membrane protein membrane-spanning segment; the sequence is SKYAIILFFVVALVIIE. The Lumenal portion of the chain corresponds to 22-441; the sequence is KERNIISRVS…LLENRNFWIT (420 aa). N-linked (GlcNAc...) asparagine glycosylation is found at Asn47 and Asn58. 106-112 lines the 3'-phosphoadenylyl sulfate pocket; sequence TRTGSSF. N-linked (GlcNAc...) asparagine glycosylation occurs at Asn221. 266 to 274 contacts 3'-phosphoadenylyl sulfate; it reads RDPRAVLAS. The N-linked (GlcNAc...) asparagine glycan is linked to Asn427.

This sequence belongs to the sulfotransferase 1 family. Gal/GlcNAc/GalNAc subfamily. N-glycosylated. In electric organ, it is moderately expressed in spinal cord and electric lobe and undetectable in non-neural tissues. Expressed in a punctate distribution in the innervated portion of electrocytes. In the CNS, it is localized within the somas of motor neurons and neurons of the electromotor nucleus.

The protein resides in the golgi apparatus membrane. It carries out the reaction chondroitin beta-D-glucuronate + n 3'-phosphoadenylyl sulfate = chondroitin 6'-sulfate + n adenosine 3',5'-bisphosphate + n H(+). It catalyses the reaction 3'-phosphoadenylyl sulfate + keratan = adenosine 3',5'-bisphosphate + keratan 6'-sulfate.. In terms of biological role, sulfotransferase that utilizes 3'-phospho-5'-adenylyl sulfate (PAPS) as sulfonate donor to catalyze the transfer of sulfate to position 6 of the N-acetylgalactosamine (GalNAc) residue of chondroitin. Chondroitin sulfate constitutes the predominant proteoglycan present in cartilage and is distributed on the surfaces of many cells and extracellular matrices. Catalyzes with a lower efficiency the sulfation of Gal residues of keratan sulfate, another glycosaminoglycan. Can also catalyze the sulfation of the Gal residues in sialyl N-acetyllactosamine (sialyl LacNAc) oligosaccharides. This Tetronarce californica (Pacific electric ray) protein is Carbohydrate sulfotransferase 3 (CHST3).